We begin with the raw amino-acid sequence, 95 residues long: Integration host factor subunit beta (95 aa).

Belongs to the bacterial histone-like protein family. Heterodimer of an alpha and a beta chain.

In terms of biological role, this protein is one of the two subunits of integration host factor, a specific DNA-binding protein that functions in genetic recombination as well as in transcriptional and translational control. This chain is Integration host factor subunit beta, found in Shewanella sp. (strain ANA-3).